Here is an 89-residue protein sequence, read N- to C-terminus: Cell division topological specificity factor (89 aa).

It belongs to the MinE family.

In terms of biological role, prevents the cell division inhibition by proteins MinC and MinD at internal division sites while permitting inhibition at polar sites. This ensures cell division at the proper site by restricting the formation of a division septum at the midpoint of the long axis of the cell. This Janthinobacterium sp. (strain Marseille) (Minibacterium massiliensis) protein is Cell division topological specificity factor.